Consider the following 629-residue polypeptide: ATP-dependent RNA helicase DeaD (629 aa).

Positions 6 to 34 match the Q motif motif; sequence TTFADLGLKAPILEALNDLGYEKPSPIQA. Residues 37 to 208 enclose the Helicase ATP-binding domain; sequence IPHLLNGRDV…RRFMKEPQEV (172 aa). 50 to 57 contacts ATP; that stretch reads AQTGSGKT. The DEAD box motif lies at 156–159; sequence DEAD. A Helicase C-terminal domain is found at 232 to 379; it reads KNEALVRFLE…EVELPNAELL (148 aa). Disordered regions lie at residues 438-481 and 560-629; these read LIVP…RERR and LGDA…GGDA. 2 stretches are compositionally biased toward basic and acidic residues: residues 446-481 and 568-629; these read MRPKREFRDRDDRGPRDRNDRGPRGDREDRPRRERR and GGER…GGDA.

The protein belongs to the DEAD box helicase family. DeaD/CsdA subfamily. As to quaternary structure, interacts with the 50S ribosomal subunit upon shifting to 15 degrees Celsius. Also found associated with the RNA degradosome at 15 degrees Celsius; binds RNase E (rne).

The protein localises to the cytoplasm. It carries out the reaction ATP + H2O = ADP + phosphate + H(+). Its function is as follows. DEAD-box RNA helicase involved in various cellular processes at low temperature, including ribosome biogenesis, mRNA degradation and translation initiation. Exhibits RNA-stimulated ATP hydrolysis and RNA unwinding activity at low temperature. Involved in 50S ribosomal subunit assembly, acting after SrmB, and could also play a role in the biogenesis of the 30S ribosomal subunit. In addition, is involved in mRNA decay, via formation of a cold-shock degradosome with RNase E. Also stimulates translation of some mRNAs, probably at the level of initiation. This Escherichia coli (strain K12) protein is ATP-dependent RNA helicase DeaD.